The chain runs to 619 residues: Dihydroxy-acid dehydratase (619 aa).

Aspartate 81 lines the Mg(2+) pocket. Cysteine 122 contributes to the [2Fe-2S] cluster binding site. Positions 123 and 124 each coordinate Mg(2+). N6-carboxylysine is present on lysine 124. Residue cysteine 195 coordinates [2Fe-2S] cluster. Glutamate 494 provides a ligand contact to Mg(2+). The Proton acceptor role is filled by serine 520.

The protein belongs to the IlvD/Edd family. As to quaternary structure, homodimer. Requires [2Fe-2S] cluster as cofactor. The cofactor is Mg(2+).

It catalyses the reaction (2R)-2,3-dihydroxy-3-methylbutanoate = 3-methyl-2-oxobutanoate + H2O. It carries out the reaction (2R,3R)-2,3-dihydroxy-3-methylpentanoate = (S)-3-methyl-2-oxopentanoate + H2O. It participates in amino-acid biosynthesis; L-isoleucine biosynthesis; L-isoleucine from 2-oxobutanoate: step 3/4. Its pathway is amino-acid biosynthesis; L-valine biosynthesis; L-valine from pyruvate: step 3/4. Functionally, functions in the biosynthesis of branched-chain amino acids. Catalyzes the dehydration of (2R,3R)-2,3-dihydroxy-3-methylpentanoate (2,3-dihydroxy-3-methylvalerate) into 2-oxo-3-methylpentanoate (2-oxo-3-methylvalerate) and of (2R)-2,3-dihydroxy-3-methylbutanoate (2,3-dihydroxyisovalerate) into 2-oxo-3-methylbutanoate (2-oxoisovalerate), the penultimate precursor to L-isoleucine and L-valine, respectively. The sequence is that of Dihydroxy-acid dehydratase from Shewanella oneidensis (strain ATCC 700550 / JCM 31522 / CIP 106686 / LMG 19005 / NCIMB 14063 / MR-1).